Consider the following 427-residue polypeptide: Putative transporter YdfJ (427 aa).

Residues 1–7 lie on the Cytoplasmic side of the membrane; the sequence is MDFQLYS. A run of 2 helical transmembrane segments spans residues 8–28 and 29–49; these read LGAA…AMAL and ILAM…AFIF. The Cytoplasmic segment spans residues 50–74; that stretch reads GKMGDRIGRKKVLFITITMMGICTT. Residues 75 to 95 form a helical membrane-spanning segment; that stretch reads LIGVLPTYAQIGVFAPILLVT. At 96 to 97 the chain is on the periplasmic side; that stretch reads LR. The helical transmembrane segment at 98–118 threads the bilayer; sequence IIQGLGAGAEISGAGTMLAEY. Residues 119 to 132 lie on the Cytoplasmic side of the membrane; that stretch reads APKGKRGIISSFVA. The helical transmembrane segment at 133 to 153 threads the bilayer; that stretch reads MGTNCGTLSATAIWAFMFFIL. Topologically, residues 154–157 are periplasmic; sequence SKEE. A helical transmembrane segment spans residues 158–178; sequence LLAWGWRIPFLASVVVMVFAI. Over 179-225 the chain is Cytoplasmic; it reads WLRMNLKESPVFEKVNDSNQPTAKPAPAGSMFQSKSFWLATGLRFGQ. A helical membrane pass occupies residues 226–246; sequence AGNSGLIQTFLAGYLVQTLLF. Residues 247–251 are Periplasmic-facing; sequence NKAIP. A helical transmembrane segment spans residues 252-272; it reads TDALMISSILGFMTIPFLGWL. Residues 273–279 lie on the Cytoplasmic side of the membrane; sequence SDKIGRR. A helical membrane pass occupies residues 280 to 300; it reads IPYIIMNTSAIVLAWPMLSII. Residues 301–307 lie on the Periplasmic side of the membrane; sequence VDKSYAP. Residues 308–328 form a helical membrane-spanning segment; the sequence is STIMVALIVIHNCAVLGLFAL. Over 329-351 the chain is Cytoplasmic; the sequence is ENITMAEMFGCKNRFTRMAISKE. A helical transmembrane segment spans residues 352–372; it reads IGGLIASGFGPILAGIFCTMT. A topological domain (periplasmic) is located at residue Glu373. Residues 374–394 traverse the membrane as a helical segment; it reads SWYPIAIMIMAYSVIGLISAL. At 395 to 427 the chain is on the cytoplasmic side; sequence KMPEVKDRDLSALEDAAEDQPRVVRAAQPSRSL.

Belongs to the major facilitator superfamily. Metabolite:H+ Symporter (MHS) family (TC 2.A.1.6) family.

It is found in the cell inner membrane. Its function is as follows. When overexpressed in human HEK-293 cells forms an inward rectifying potassium channel. The sequence is that of Putative transporter YdfJ (ydfJ) from Escherichia coli (strain K12).